A 416-amino-acid polypeptide reads, in one-letter code: MMPQLQFKDAFWCRDFTAHTGYEVLLQRLLDGRKMCKDMEELLRQRAQAEERYGKELVQIARKAGGQTEINSLRASFDSLKQQMENVGSSHIQLALTLREELRSLEEFRERQKEQRKKYEAVMDRVQKSKLSLYKKAMESKKTYEQKCRDADDAEQAFERISANGHQKQVEKSQNKARQCKDSATEAERVYRQSIAQLEKVRAEWEQEHRTTCEAFQLQEFDRLTILRNALWVHSNQLSMQCVKDDELYEEVRLTLEGCSIDADIDSFIQAKSTGTEPPAPVPYQNYYDREVTPLTSSPGIQPSCGMIKRFSGLLHGSPKTTSLAASAASTETLTPTPERNEGVYTAIAVQEIQGNPASPAQEYRALYDYTAQNPDELDLSAGDILEVILEGEDGWWTVERNGQRGFVPGSYLEKL.

The F-BAR domain occupies Leu5–Asp264. A coiled-coil region spans residues His166–Thr212. Ser318 is modified (phosphoserine). The residue at position 345 (Tyr345) is a Phosphotyrosine. One can recognise an SH3 domain in the interval Ser359–Leu416.

In terms of assembly, homodimer. Homotrimer. Interacts (via coiled-coil domain) with CD2AP, PTPN12 and PTPN18. Interacts (via SH3 domain) with ABL1 and WAS. Interacts (via SH3 and coiled-coil domains) with MEFV (via B-box zinc finger); the interaction allows binding of MEFV to PYCARD and facilitates formation of PYCARD pyroptosomes. Interacts with CD2, DNM2 and FASLG. In terms of processing, dephosphorylated on Tyr-345 by PTPN18, this event negatively regulates the association of PSTPIP1 with SH2 domain-containing proteins as tyrosine kinase. Phosphorylation of Tyr-345 is probably required for subsequent phosphorylation at other tyrosine residues. Phosphorylation is induced by activation of the EGFR and PDGFR in a ABL1 dependent manner. The phosphorylation regulates the interaction with WAS and with MEFV. In terms of tissue distribution, highly expressed in the peripheral blood leukocytes, granulocytes and monocytes, namely in T-cells and natural killer cells, and in spleen. Weakly expressed in the thymus, small intestine, lung and placenta.

It is found in the cytoplasm. It localises to the cell membrane. Its subcellular location is the cell projection. The protein localises to the uropodium. The protein resides in the cytoskeleton. It is found in the perinuclear region. It localises to the lamellipodium. Its subcellular location is the cleavage furrow. In terms of biological role, involved in regulation of the actin cytoskeleton. May regulate WAS actin-bundling activity. Bridges the interaction between ABL1 and PTPN18 leading to ABL1 dephosphorylation. May play a role as a scaffold protein between PTPN12 and WAS and allow PTPN12 to dephosphorylate WAS. Has the potential to physically couple CD2 and CD2AP to WAS. Acts downstream of CD2 and CD2AP to recruit WAS to the T-cell:APC contact site so as to promote the actin polymerization required for synapse induction during T-cell activation. Down-regulates CD2-stimulated adhesion through the coupling of PTPN12 to CD2. Also has a role in innate immunity and the inflammatory response. Recruited to inflammasomes by MEFV. Induces formation of pyroptosomes, large supramolecular structures composed of oligomerized PYCARD dimers which form prior to inflammatory apoptosis. Binding to MEFV allows MEFV to bind to PYCARD and facilitates pyroptosome formation. Regulates endocytosis and cell migration in neutrophils. The sequence is that of Proline-serine-threonine phosphatase-interacting protein 1 (PSTPIP1) from Homo sapiens (Human).